Consider the following 275-residue polypeptide: NH(3)-dependent NAD(+) synthetase (275 aa).

ATP is bound at residue G46–S53. D52 is a Mg(2+) binding site. R140 contacts deamido-NAD(+). Residue T160 participates in ATP binding. Residue E165 participates in Mg(2+) binding. Deamido-NAD(+) contacts are provided by K173 and D180. The ATP site is built by K189 and T211. H260 to K261 lines the deamido-NAD(+) pocket.

This sequence belongs to the NAD synthetase family. Homodimer.

It catalyses the reaction deamido-NAD(+) + NH4(+) + ATP = AMP + diphosphate + NAD(+) + H(+). The protein operates within cofactor biosynthesis; NAD(+) biosynthesis; NAD(+) from deamido-NAD(+) (ammonia route): step 1/1. Catalyzes the ATP-dependent amidation of deamido-NAD to form NAD. Uses ammonia as a nitrogen source. The polypeptide is NH(3)-dependent NAD(+) synthetase (Salmonella agona (strain SL483)).